The primary structure comprises 1236 residues: DNA-directed RNA polymerase subunit beta (1236 aa).

The interval 1185 to 1236 (IEGSEDYTEPKQPNDNYLEEEENKDKESDYDEDLNFDDLTKGLQLDDFNDEH) is disordered. Acidic residues predominate over residues 1201-1220 (YLEEEENKDKESDYDEDLNF).

It belongs to the RNA polymerase beta chain family. In terms of assembly, the RNAP catalytic core consists of 2 alpha, 1 beta, 1 beta' and 1 omega subunit. When a sigma factor is associated with the core the holoenzyme is formed, which can initiate transcription.

It carries out the reaction RNA(n) + a ribonucleoside 5'-triphosphate = RNA(n+1) + diphosphate. Its function is as follows. DNA-dependent RNA polymerase catalyzes the transcription of DNA into RNA using the four ribonucleoside triphosphates as substrates. The polypeptide is DNA-directed RNA polymerase subunit beta (Clostridium tetani (strain Massachusetts / E88)).